The following is a 495-amino-acid chain: Guanosine-5'-triphosphate,3'-diphosphate pyrophosphatase (495 aa).

Belongs to the GppA/Ppx family. GppA subfamily.

It catalyses the reaction guanosine 3'-diphosphate 5'-triphosphate + H2O = guanosine 3',5'-bis(diphosphate) + phosphate + H(+). The protein operates within purine metabolism; ppGpp biosynthesis; ppGpp from GTP: step 2/2. Functionally, catalyzes the conversion of pppGpp to ppGpp. Guanosine pentaphosphate (pppGpp) is a cytoplasmic signaling molecule which together with ppGpp controls the 'stringent response', an adaptive process that allows bacteria to respond to amino acid starvation, resulting in the coordinated regulation of numerous cellular activities. This chain is Guanosine-5'-triphosphate,3'-diphosphate pyrophosphatase, found in Enterobacter sp. (strain 638).